A 148-amino-acid polypeptide reads, in one-letter code: Extracellular globin-2B (148 aa).

The Globin domain occupies C3–P148. C4 and C135 are oxidised to a cystine. Residue H98 participates in heme b binding.

It belongs to the globin family. In terms of assembly, disulfide bonded trimer of chains IIA, IIB, and IIC.

It is found in the secreted. In Tylorrhynchus heterochetus (Japanese palolo worm), this protein is Extracellular globin-2B.